We begin with the raw amino-acid sequence, 147 residues long: Large ribosomal subunit protein uL15 (147 aa).

The tract at residues 1 to 45 (MTIKLHHLRPAPGAKSDKIRVGRGEGGKRGKTAGRGTKGTKARKN) is disordered. A compositionally biased stretch (basic and acidic residues) spans 15–28 (KSDKIRVGRGEGGK).

It belongs to the universal ribosomal protein uL15 family. In terms of assembly, part of the 50S ribosomal subunit.

Its function is as follows. Binds to the 23S rRNA. In Rhodococcus jostii (strain RHA1), this protein is Large ribosomal subunit protein uL15.